Reading from the N-terminus, the 298-residue chain is NAD kinase (298 aa).

The Proton acceptor role is filled by D80. Residues 80 to 81, 154 to 155, R182, D184, 195 to 200, A219, and Q253 contribute to the NAD(+) site; these read DG, ND, and TAYALS.

This sequence belongs to the NAD kinase family. The cofactor is a divalent metal cation.

The protein localises to the cytoplasm. It catalyses the reaction NAD(+) + ATP = ADP + NADP(+) + H(+). Involved in the regulation of the intracellular balance of NAD and NADP, and is a key enzyme in the biosynthesis of NADP. Catalyzes specifically the phosphorylation on 2'-hydroxyl of the adenosine moiety of NAD to yield NADP. The protein is NAD kinase of Acidovorax sp. (strain JS42).